Here is a 207-residue protein sequence, read N- to C-terminus: Guanylate kinase (207 aa).

The region spanning 3–181 (GQLFVICGPS…AVEMVVSIVR (179 aa)) is the Guanylate kinase-like domain. Residue 10 to 17 (GPSGAGKT) coordinates ATP.

This sequence belongs to the guanylate kinase family.

Its subcellular location is the cytoplasm. It catalyses the reaction GMP + ATP = GDP + ADP. Essential for recycling GMP and indirectly, cGMP. The sequence is that of Guanylate kinase (gmk) from Thermotoga maritima (strain ATCC 43589 / DSM 3109 / JCM 10099 / NBRC 100826 / MSB8).